A 167-amino-acid polypeptide reads, in one-letter code: Small ribosomal subunit protein uS5 (167 aa).

An S5 DRBM domain is found at 12–75 (LQEKLVAVNR…EKARRNIVSV (64 aa)).

Belongs to the universal ribosomal protein uS5 family. In terms of assembly, part of the 30S ribosomal subunit. Contacts proteins S4 and S8.

Functionally, with S4 and S12 plays an important role in translational accuracy. Its function is as follows. Located at the back of the 30S subunit body where it stabilizes the conformation of the head with respect to the body. The chain is Small ribosomal subunit protein uS5 from Shewanella loihica (strain ATCC BAA-1088 / PV-4).